The following is a 234-amino-acid chain: Ribosome maturation protein SDO1 homolog (234 aa).

Belongs to the SDO1/SBDS family.

This is Ribosome maturation protein SDO1 homolog from Archaeoglobus fulgidus (strain ATCC 49558 / DSM 4304 / JCM 9628 / NBRC 100126 / VC-16).